The sequence spans 883 residues: Brevican core protein (883 aa).

An N-terminal signal peptide occupies residues 1 to 22 (MIPLLLSLLAALVLTQAPAALA). An Ig-like V-type domain is found at 35–154 (FRVRIGATQL…SSDAVEVKVK (120 aa)). 5 cysteine pairs are disulfide-bonded: C56–C136, C178–C249, C202–C223, C276–C351, and C300–C321. An N-linked (GlcNAc...) asparagine glycan is attached at N129. 2 Link domains span residues 156 to 251 (VVFL…YCYA) and 256 to 353 (GELF…YCFR). S224 carries the phosphoserine modification. N-linked (GlcNAc...) asparagine glycosylation occurs at N336. Residues 402–592 (SIPISEDGGG…LETPSEEKSG (191 aa)) are disordered. S413 carries the post-translational modification Phosphoserine. A glycan (O-linked (Xyl...) (chondroitin sulfate) serine) is linked at S413. 2 stretches are compositionally biased toward acidic residues: residues 440–451 (SSEEEGVALEEE) and 459–468 (ALEEEKEQED). Over residues 479-495 (PLPTGSETEHSLSQVSP) the composition is skewed to polar residues. Over residues 581 to 592 (RELETPSEEKSG) the composition is skewed to basic and acidic residues. An EGF-like domain is found at 622-658 (SSGDCIPSPCHNGGTCLEEKEGFRCLCLPGYGGDLCD). 8 cysteine pairs are disulfide-bonded: C626-C637, C631-C646, C648-C657, C664-C675, C692-C784, C760-C776, C791-C834, and C820-C847. Residues 658–786 (DVGLHFCSPG…NYHLSYTCKM (129 aa)) form the C-type lectin domain. Residues 789 to 849 (VSCGPPPQLP…WEAPQISCVP (61 aa)) enclose the Sushi domain. Residues 854–883 (RALRSMDAPEGPRGQLSRHRKAPLTPPSSL) are disordered.

Belongs to the aggrecan/versican proteoglycan family. In terms of assembly, interacts with TNR. Post-translationally, O-glycosylated; contains chondroitin sulfate. Expressed in the retina, specifically around the inner and outer segments of photoreceptors, retinal pigment epithelium, outer plexiform layer, and the ganglion cell layer (at protein level). Brain. Expressed in the brainstem and cerebellum in a perineuronal net pattern.

The protein resides in the secreted. Its subcellular location is the extracellular space. It localises to the extracellular matrix. Its function is as follows. May play a role in the terminally differentiating and the adult nervous system during postnatal development. Could stabilize interactions between hyaluronan (HA) and brain proteoglycans. This Mus musculus (Mouse) protein is Brevican core protein (Bcan).